The following is a 197-amino-acid chain: Small ribosomal subunit protein uS11m (197 aa).

Over residues 43-52 (AAKEEVEKAE) the composition is skewed to basic and acidic residues. Residues 43-66 (AAKEEVEKAETPAPAPSRSSFSIY) are disordered.

Belongs to the universal ribosomal protein uS11 family. As to quaternary structure, component of the mitochondrial ribosome small subunit (28S) which comprises a 12S rRNA and about 30 distinct proteins.

Its subcellular location is the mitochondrion. The polypeptide is Small ribosomal subunit protein uS11m (MRPS11) (Bos taurus (Bovine)).